Reading from the N-terminus, the 234-residue chain is Large ribosomal subunit protein uL1 (234 aa).

Belongs to the universal ribosomal protein uL1 family. Part of the 50S ribosomal subunit.

Functionally, binds directly to 23S rRNA. The L1 stalk is quite mobile in the ribosome, and is involved in E site tRNA release. In terms of biological role, protein L1 is also a translational repressor protein, it controls the translation of the L11 operon by binding to its mRNA. The protein is Large ribosomal subunit protein uL1 of Erwinia tasmaniensis (strain DSM 17950 / CFBP 7177 / CIP 109463 / NCPPB 4357 / Et1/99).